We begin with the raw amino-acid sequence, 257 residues long: Acetylglutamate kinase (257 aa).

Substrate contacts are provided by residues 43 to 44 (GG), arginine 65, and asparagine 157. Residues 180–185 (DVSGIL) and 208–210 (IIT) contribute to the ATP site.

Belongs to the acetylglutamate kinase family. ArgB subfamily. In terms of assembly, homodimer.

It is found in the cytoplasm. It catalyses the reaction N-acetyl-L-glutamate + ATP = N-acetyl-L-glutamyl 5-phosphate + ADP. It functions in the pathway amino-acid biosynthesis; L-arginine biosynthesis; N(2)-acetyl-L-ornithine from L-glutamate: step 2/4. Functionally, catalyzes the ATP-dependent phosphorylation of N-acetyl-L-glutamate. The sequence is that of Acetylglutamate kinase from Salmonella paratyphi A (strain AKU_12601).